Consider the following 87-residue polypeptide: Small ribosomal subunit protein uS15 (87 aa).

It belongs to the universal ribosomal protein uS15 family. Part of the 30S ribosomal subunit. Forms a bridge to the 50S subunit in the 70S ribosome, contacting the 23S rRNA.

Its function is as follows. One of the primary rRNA binding proteins, it binds directly to 16S rRNA where it helps nucleate assembly of the platform of the 30S subunit by binding and bridging several RNA helices of the 16S rRNA. Functionally, forms an intersubunit bridge (bridge B4) with the 23S rRNA of the 50S subunit in the ribosome. This Cutibacterium acnes (strain DSM 16379 / KPA171202) (Propionibacterium acnes) protein is Small ribosomal subunit protein uS15.